A 547-amino-acid chain; its full sequence is Chaperonin GroEL (547 aa).

Residues 30–33, K51, 87–91, G415, and D495 contribute to the ATP site; these read TLGP and DGTTT.

This sequence belongs to the chaperonin (HSP60) family. As to quaternary structure, forms a cylinder of 14 subunits composed of two heptameric rings stacked back-to-back. Interacts with the co-chaperonin GroES.

The protein resides in the cytoplasm. It carries out the reaction ATP + H2O + a folded polypeptide = ADP + phosphate + an unfolded polypeptide.. In terms of biological role, together with its co-chaperonin GroES, plays an essential role in assisting protein folding. The GroEL-GroES system forms a nano-cage that allows encapsulation of the non-native substrate proteins and provides a physical environment optimized to promote and accelerate protein folding. The polypeptide is Chaperonin GroEL (Rhizobium leguminosarum bv. trifolii (strain WSM2304)).